The primary structure comprises 239 residues: L-cystine transport system permease protein TcyL (239 aa).

The region spanning 21–216 is the ABC transmembrane type-1 domain; the sequence is LPVTLYILTL…AVAVLFEWFF (196 aa). The next 4 membrane-spanning stretches (helical) occupy residues 25 to 45, 69 to 89, 96 to 116, and 196 to 216; these read LYILTLSLLFGFVLGLFLALP, IMVQLFIVFYGIPALTGLIGI, PFYAAVATYALSNAAAAAEII, and EVYIALSIVYYAVAVLFEWFF.

This sequence belongs to the binding-protein-dependent transport system permease family. As to quaternary structure, the complex is composed of two ATP-binding proteins (TcyN), two transmembrane proteins (TcyL and TcyM) and two solute-binding proteins (TcyJ and TcyK).

It is found in the cell membrane. In terms of biological role, part of the ABC transporter complex TcyJKLMN involved in L-cystine import. Probably responsible for the translocation of the substrate across the membrane. Is also involved in cystathionine, djenkolate, and S-methylcysteine transport. This Bacillus subtilis (strain 168) protein is L-cystine transport system permease protein TcyL (tcyL).